A 234-amino-acid polypeptide reads, in one-letter code: Adenosine 5'-phosphosulfate reductase (234 aa).

Residues Cys120, Cys121, Cys203, and Cys206 each contribute to the [4Fe-4S] cluster site. Cys229 functions as the Nucleophile; cysteine thiosulfonate intermediate in the catalytic mechanism.

Belongs to the PAPS reductase family. CysH subfamily. Requires [4Fe-4S] cluster as cofactor.

It is found in the cytoplasm. It carries out the reaction [thioredoxin]-disulfide + sulfite + AMP + 2 H(+) = adenosine 5'-phosphosulfate + [thioredoxin]-dithiol. Its pathway is sulfur metabolism; hydrogen sulfide biosynthesis; sulfite from sulfate. Catalyzes the formation of sulfite from adenosine 5'-phosphosulfate (APS) using thioredoxin as an electron donor. The chain is Adenosine 5'-phosphosulfate reductase from Bacillus cereus (strain B4264).